A 122-amino-acid polypeptide reads, in one-letter code: MEPWWPRGTGANAPWVLVAVPPGLFPSLLGACCTLTSSSWLQPRFWGLGWRVEVGLEGAGGSSQNYQAALPSFFCLAASPASRPAIFGILAAEPPSASPQAPWPKPGCASPHGSHWPSILIC.

This is an uncharacterized protein from Homo sapiens (Human).